The primary structure comprises 109 residues: Putative pterin-4-alpha-carbinolamine dehydratase (109 aa).

This sequence belongs to the pterin-4-alpha-carbinolamine dehydratase family.

The catalysed reaction is (4aS,6R)-4a-hydroxy-L-erythro-5,6,7,8-tetrahydrobiopterin = (6R)-L-erythro-6,7-dihydrobiopterin + H2O. The polypeptide is Putative pterin-4-alpha-carbinolamine dehydratase (Rickettsia canadensis (strain McKiel)).